We begin with the raw amino-acid sequence, 685 residues long: Glycine--tRNA ligase beta subunit (685 aa).

This sequence belongs to the class-II aminoacyl-tRNA synthetase family. Tetramer of two alpha and two beta subunits.

It is found in the cytoplasm. It catalyses the reaction tRNA(Gly) + glycine + ATP = glycyl-tRNA(Gly) + AMP + diphosphate. This Azotobacter vinelandii (strain DJ / ATCC BAA-1303) protein is Glycine--tRNA ligase beta subunit.